A 457-amino-acid polypeptide reads, in one-letter code: Biphenyl dioxygenase subunit alpha (457 aa).

Positions 58–174 constitute a Rieske domain; the sequence is WLMLGHETHI…VETYKGLVFA (117 aa). Residues Cys100, His102, Cys120, and His123 each coordinate [2Fe-2S] cluster. Fe cation-binding residues include His233 and His239.

This sequence belongs to the bacterial ring-hydroxylating dioxygenase alpha subunit family. Heterohexamer consisting of three BphA subunits and three BphE subunits. A ferredoxin (BphF) and a ferredoxin reductase (BphG) must be present to obtain activity. [2Fe-2S] cluster is required as a cofactor. The cofactor is Fe cation.

It carries out the reaction biphenyl + NADH + O2 + H(+) = (2R,3S)-3-phenylcyclohexa-3,5-diene-1,2-diol + NAD(+). Its pathway is xenobiotic degradation; biphenyl degradation; 2-hydroxy-2,4-pentadienoate and benzoate from biphenyl: step 1/4. The protein is Biphenyl dioxygenase subunit alpha (bphA) of Comamonas testosteroni (Pseudomonas testosteroni).